Consider the following 237-residue polypeptide: Ribonuclease PH (237 aa).

Phosphate contacts are provided by residues R86 and 124-126 (GTR).

It belongs to the RNase PH family. As to quaternary structure, homohexameric ring arranged as a trimer of dimers.

The enzyme catalyses tRNA(n+1) + phosphate = tRNA(n) + a ribonucleoside 5'-diphosphate. In terms of biological role, phosphorolytic 3'-5' exoribonuclease that plays an important role in tRNA 3'-end maturation. Removes nucleotide residues following the 3'-CCA terminus of tRNAs; can also add nucleotides to the ends of RNA molecules by using nucleoside diphosphates as substrates, but this may not be physiologically important. Probably plays a role in initiation of 16S rRNA degradation (leading to ribosome degradation) during starvation. This chain is Ribonuclease PH, found in Methylorubrum populi (strain ATCC BAA-705 / NCIMB 13946 / BJ001) (Methylobacterium populi).